A 548-amino-acid polypeptide reads, in one-letter code: Chaperonin GroEL (548 aa).

Residues 29 to 32 (TLGP), Lys-50, 86 to 90 (DGTTT), Gly-414, 478 to 480 (NAA), and Asp-494 each bind ATP.

The protein belongs to the chaperonin (HSP60) family. Forms a cylinder of 14 subunits composed of two heptameric rings stacked back-to-back. Interacts with the co-chaperonin GroES.

The protein localises to the cytoplasm. The enzyme catalyses ATP + H2O + a folded polypeptide = ADP + phosphate + an unfolded polypeptide.. Together with its co-chaperonin GroES, plays an essential role in assisting protein folding. The GroEL-GroES system forms a nano-cage that allows encapsulation of the non-native substrate proteins and provides a physical environment optimized to promote and accelerate protein folding. This chain is Chaperonin GroEL, found in Alcanivorax borkumensis (strain ATCC 700651 / DSM 11573 / NCIMB 13689 / SK2).